The sequence spans 171 residues: Crossover junction endodeoxyribonuclease RuvC (171 aa).

Residues Asp12, Glu72, and Asp144 contribute to the active site. The Mg(2+) site is built by Asp12, Glu72, and Asp144.

It belongs to the RuvC family. As to quaternary structure, homodimer which binds Holliday junction (HJ) DNA. The HJ becomes 2-fold symmetrical on binding to RuvC with unstacked arms; it has a different conformation from HJ DNA in complex with RuvA. In the full resolvosome a probable DNA-RuvA(4)-RuvB(12)-RuvC(2) complex forms which resolves the HJ. The cofactor is Mg(2+).

Its subcellular location is the cytoplasm. It carries out the reaction Endonucleolytic cleavage at a junction such as a reciprocal single-stranded crossover between two homologous DNA duplexes (Holliday junction).. In terms of biological role, the RuvA-RuvB-RuvC complex processes Holliday junction (HJ) DNA during genetic recombination and DNA repair. Endonuclease that resolves HJ intermediates. Cleaves cruciform DNA by making single-stranded nicks across the HJ at symmetrical positions within the homologous arms, yielding a 5'-phosphate and a 3'-hydroxyl group; requires a central core of homology in the junction. The consensus cleavage sequence is 5'-(A/T)TT(C/G)-3'. Cleavage occurs on the 3'-side of the TT dinucleotide at the point of strand exchange. HJ branch migration catalyzed by RuvA-RuvB allows RuvC to scan DNA until it finds its consensus sequence, where it cleaves and resolves the cruciform DNA. This chain is Crossover junction endodeoxyribonuclease RuvC, found in Afipia carboxidovorans (strain ATCC 49405 / DSM 1227 / KCTC 32145 / OM5) (Oligotropha carboxidovorans).